Here is a 215-residue protein sequence, read N- to C-terminus: MKNKILDLRAYFIAGPQDFPKLSIDDAIDKISVIIKSGVTVYQFRDKGTIYKNKNQRLEVAKRLQEVAQKAAVSFIVNDDVELARELSADGIHVGQDDDSVSKIRELIGQEMWVGLSVSNDMELESAQKSGADYLGIGPIYPTNSKSDAAEPIGVDHLRKMLEHNQLPTVGIGGITENSLTELSKIGLGGVAVISLLTESENYKNMVQKIKQNIR.

Residues 43-47 and Asn-78 contribute to the 4-amino-2-methyl-5-(diphosphooxymethyl)pyrimidine site; that span reads QFRDK. Positions 79 and 98 each coordinate Mg(2+). A 4-amino-2-methyl-5-(diphosphooxymethyl)pyrimidine-binding site is contributed by Ser-117. 143–145 provides a ligand contact to 2-[(2R,5Z)-2-carboxy-4-methylthiazol-5(2H)-ylidene]ethyl phosphate; that stretch reads TNS. Residue Lys-146 participates in 4-amino-2-methyl-5-(diphosphooxymethyl)pyrimidine binding. Residues Gly-174 and 194-195 each bind 2-[(2R,5Z)-2-carboxy-4-methylthiazol-5(2H)-ylidene]ethyl phosphate; that span reads IS.

It belongs to the thiamine-phosphate synthase family. Mg(2+) is required as a cofactor.

It catalyses the reaction 2-[(2R,5Z)-2-carboxy-4-methylthiazol-5(2H)-ylidene]ethyl phosphate + 4-amino-2-methyl-5-(diphosphooxymethyl)pyrimidine + 2 H(+) = thiamine phosphate + CO2 + diphosphate. It carries out the reaction 2-(2-carboxy-4-methylthiazol-5-yl)ethyl phosphate + 4-amino-2-methyl-5-(diphosphooxymethyl)pyrimidine + 2 H(+) = thiamine phosphate + CO2 + diphosphate. The enzyme catalyses 4-methyl-5-(2-phosphooxyethyl)-thiazole + 4-amino-2-methyl-5-(diphosphooxymethyl)pyrimidine + H(+) = thiamine phosphate + diphosphate. The protein operates within cofactor biosynthesis; thiamine diphosphate biosynthesis; thiamine phosphate from 4-amino-2-methyl-5-diphosphomethylpyrimidine and 4-methyl-5-(2-phosphoethyl)-thiazole: step 1/1. Its function is as follows. Condenses 4-methyl-5-(beta-hydroxyethyl)thiazole monophosphate (THZ-P) and 2-methyl-4-amino-5-hydroxymethyl pyrimidine pyrophosphate (HMP-PP) to form thiamine monophosphate (TMP). The protein is Thiamine-phosphate synthase of Lactococcus lactis subsp. lactis (strain IL1403) (Streptococcus lactis).